The sequence spans 1705 residues: Protein TIC 214 (1705 aa).

5 helical membrane passes run 18–38, 67–87, 127–147, 175–195, and 218–238; these read IINS…FSIG, FITG…HLAL, LSIQ…HFIL, VGWI…LVWI, and SMSM…HYLG.

Belongs to the TIC214 family. As to quaternary structure, part of the Tic complex.

It is found in the plastid. The protein localises to the chloroplast inner membrane. In terms of biological role, involved in protein precursor import into chloroplasts. May be part of an intermediate translocation complex acting as a protein-conducting channel at the inner envelope. The protein is Protein TIC 214 of Helianthus annuus (Common sunflower).